The chain runs to 273 residues: Nitrogenase iron protein (273 aa).

8-15 (GKGGIGKS) serves as a coordination point for ATP. Position 95 (Cys95) interacts with [4Fe-4S] cluster. Position 98 is an ADP-ribosylarginine; by dinitrogenase reductase ADP-ribosyltransferase (Arg98). Position 130 (Cys130) interacts with [4Fe-4S] cluster.

It belongs to the NifH/BchL/ChlL family. Homodimer. Requires [4Fe-4S] cluster as cofactor. The reversible ADP-ribosylation of Arg-98 inactivates the nitrogenase reductase and regulates nitrogenase activity.

It catalyses the reaction N2 + 8 reduced [2Fe-2S]-[ferredoxin] + 16 ATP + 16 H2O = H2 + 8 oxidized [2Fe-2S]-[ferredoxin] + 2 NH4(+) + 16 ADP + 16 phosphate + 6 H(+). In terms of biological role, the key enzymatic reactions in nitrogen fixation are catalyzed by the nitrogenase complex, which has 2 components: the iron protein and the molybdenum-iron protein. This chain is Nitrogenase iron protein, found in Methanosarcina mazei (strain ATCC BAA-159 / DSM 3647 / Goe1 / Go1 / JCM 11833 / OCM 88) (Methanosarcina frisia).